The chain runs to 571 residues: Proline--tRNA ligase (571 aa).

It belongs to the class-II aminoacyl-tRNA synthetase family. ProS type 1 subfamily. In terms of assembly, homodimer.

The protein localises to the cytoplasm. The catalysed reaction is tRNA(Pro) + L-proline + ATP = L-prolyl-tRNA(Pro) + AMP + diphosphate. Functionally, catalyzes the attachment of proline to tRNA(Pro) in a two-step reaction: proline is first activated by ATP to form Pro-AMP and then transferred to the acceptor end of tRNA(Pro). As ProRS can inadvertently accommodate and process non-cognate amino acids such as alanine and cysteine, to avoid such errors it has two additional distinct editing activities against alanine. One activity is designated as 'pretransfer' editing and involves the tRNA(Pro)-independent hydrolysis of activated Ala-AMP. The other activity is designated 'posttransfer' editing and involves deacylation of mischarged Ala-tRNA(Pro). The misacylated Cys-tRNA(Pro) is not edited by ProRS. The chain is Proline--tRNA ligase from Haemophilus ducreyi (strain 35000HP / ATCC 700724).